We begin with the raw amino-acid sequence, 306 residues long: Glutaminase (306 aa).

7 residues coordinate substrate: Ser-64, Asn-115, Glu-159, Asn-166, Tyr-190, Tyr-242, and Val-260.

The protein belongs to the glutaminase family. In terms of assembly, homotetramer.

The enzyme catalyses L-glutamine + H2O = L-glutamate + NH4(+). The protein is Glutaminase of Vibrio cholerae serotype O1 (strain ATCC 39541 / Classical Ogawa 395 / O395).